We begin with the raw amino-acid sequence, 426 residues long: Colanic acid biosynthesis protein WcaK (426 aa).

The protein belongs to the polysaccharide pyruvyl transferase family.

It functions in the pathway slime biogenesis; slime polysaccharide biosynthesis. This Escherichia coli (strain K12) protein is Colanic acid biosynthesis protein WcaK (wcaK).